Consider the following 1779-residue polypeptide: Fibronectin type III domain-containing protein 1 (1779 aa).

An N-terminal signal peptide occupies residues 1-29 (MAPEARASPRLLLRAALLLLAALLPVASS). Fibronectin type-III domains follow at residues 33–126 (PVDH…KAPR), 103–203 (PNKP…AEED), 207–302 (VPED…TPES), and 307–402 (APEN…IPTT). Over residues 400–413 (PTTSSTEASVQPNG) the composition is skewed to polar residues. Disordered stretches follow at residues 400-442 (PTTS…MPPA), 459-1108 (NGVA…RNLD), 1120-1227 (EENT…KPNG), and 1330-1401 (PTTT…PPGT). Residues 423–437 (QQPSSSAPKVAASSQ) are compositionally biased toward low complexity. A compositionally biased stretch (polar residues) spans 493–506 (NPRSSRLETLNQKQ). Residues 534 to 554 (SRKEGMDRRGPSLDPHPHPRV) are compositionally biased toward basic and acidic residues. 2 stretches are compositionally biased toward polar residues: residues 557 to 570 (SASS…STDN) and 590 to 607 (SSGS…TSAP). Low complexity predominate over residues 629–640 (ASSSTSRQSHSS). Residue S651 is modified to Phosphoserine. Over residues 676 to 694 (HASSSHTTSRTASSSHPSA) the composition is skewed to low complexity. A Phosphoserine modification is found at S699. Basic and acidic residues predominate over residues 707 to 720 (DSDRAAEDTIRRAE). 2 stretches are compositionally biased toward polar residues: residues 763-784 (PSVS…SLPA) and 861-875 (PLSS…STTD). The span at 879–904 (PQTSPASTSRQPSPARPPASRSQPSP) shows a compositional bias: low complexity. 2 stretches are compositionally biased toward polar residues: residues 957–971 (APQN…TYED) and 1003–1020 (VGSQ…SQAG). Over residues 1085–1097 (LSTSVKKWPSSSS) the composition is skewed to low complexity. The segment covering 1098 to 1108 (PRDKYADRNLD) has biased composition (basic and acidic residues). Composition is skewed to polar residues over residues 1147-1159 (NPAT…NTHS) and 1166-1177 (RAPSSYSSTTPM). Residues 1330–1389 (PTTTMPPSTTTTTVPPTTTLPPTTTTTRRTTTTRRTTTTRRPTTTTRATRRTTTTTTTPE) are compositionally biased toward low complexity. The region spanning 1543-1637 (APRNITVVAM…PSVSFVTESD (95 aa)) is the Fibronectin type-III 5 domain. Residue N1546 is glycosylated (N-linked (GlcNAc...) asparagine).

It is found in the secreted. In terms of biological role, may be an activator of G protein signaling. In Rattus norvegicus (Rat), this protein is Fibronectin type III domain-containing protein 1 (Fndc1).